Consider the following 192-residue polypeptide: Elongation factor P (192 aa).

This sequence belongs to the elongation factor P family.

It localises to the cytoplasm. It functions in the pathway protein biosynthesis; polypeptide chain elongation. Involved in peptide bond synthesis. Stimulates efficient translation and peptide-bond synthesis on native or reconstituted 70S ribosomes in vitro. Probably functions indirectly by altering the affinity of the ribosome for aminoacyl-tRNA, thus increasing their reactivity as acceptors for peptidyl transferase. In Borrelia recurrentis (strain A1), this protein is Elongation factor P.